A 383-amino-acid polypeptide reads, in one-letter code: S-adenosylmethionine synthase (383 aa).

Position 15 (His15) interacts with ATP. Mg(2+) is bound at residue Asp17. Glu43 contacts K(+). 2 residues coordinate L-methionine: Glu56 and Gln99. Residues 99 to 109 (QSQDINQGVDR) form a flexible loop region. ATP is bound by residues 164 to 166 (DAK), 230 to 231 (RF), Asp239, 245 to 246 (RK), Ala262, and Lys266. Asp239 serves as a coordination point for L-methionine. Lys270 contacts L-methionine.

Belongs to the AdoMet synthase family. Homotetramer; dimer of dimers. Mg(2+) is required as a cofactor. Requires K(+) as cofactor.

The protein localises to the cytoplasm. The enzyme catalyses L-methionine + ATP + H2O = S-adenosyl-L-methionine + phosphate + diphosphate. Its pathway is amino-acid biosynthesis; S-adenosyl-L-methionine biosynthesis; S-adenosyl-L-methionine from L-methionine: step 1/1. Functionally, catalyzes the formation of S-adenosylmethionine (AdoMet) from methionine and ATP. The overall synthetic reaction is composed of two sequential steps, AdoMet formation and the subsequent tripolyphosphate hydrolysis which occurs prior to release of AdoMet from the enzyme. The chain is S-adenosylmethionine synthase from Actinobacillus succinogenes (strain ATCC 55618 / DSM 22257 / CCUG 43843 / 130Z).